The chain runs to 176 residues: Peptide methionine sulfoxide reductase MsrA (176 aa).

The active site involves C10.

Belongs to the MsrA Met sulfoxide reductase family.

It catalyses the reaction L-methionyl-[protein] + [thioredoxin]-disulfide + H2O = L-methionyl-(S)-S-oxide-[protein] + [thioredoxin]-dithiol. The catalysed reaction is [thioredoxin]-disulfide + L-methionine + H2O = L-methionine (S)-S-oxide + [thioredoxin]-dithiol. Its function is as follows. Has an important function as a repair enzyme for proteins that have been inactivated by oxidation. Catalyzes the reversible oxidation-reduction of methionine sulfoxide in proteins to methionine. This is Peptide methionine sulfoxide reductase MsrA from Leptospira borgpetersenii serovar Hardjo-bovis (strain L550).